A 175-amino-acid polypeptide reads, in one-letter code: Shikimate kinase (175 aa).

Position 11–16 (11–16) interacts with ATP; that stretch reads GAGKTT. Mg(2+) is bound at residue T15. The substrate site is built by D33, R57, and G79. Residue R118 participates in ATP binding. R140 contacts substrate.

Belongs to the shikimate kinase family. In terms of assembly, monomer. It depends on Mg(2+) as a cofactor.

It is found in the cytoplasm. It carries out the reaction shikimate + ATP = 3-phosphoshikimate + ADP + H(+). The protein operates within metabolic intermediate biosynthesis; chorismate biosynthesis; chorismate from D-erythrose 4-phosphate and phosphoenolpyruvate: step 5/7. In terms of biological role, catalyzes the specific phosphorylation of the 3-hydroxyl group of shikimic acid using ATP as a cosubstrate. This chain is Shikimate kinase, found in Bacteroides thetaiotaomicron (strain ATCC 29148 / DSM 2079 / JCM 5827 / CCUG 10774 / NCTC 10582 / VPI-5482 / E50).